The following is a 313-amino-acid chain: MATVALLRSLRRRELHAAHISAYKFSSASAGGRTTELRLHGVKDIIAVASGKGGVGKSSTAVNLAVALANKCELKIGLLDADVYGPSVPIMMNINQKPQVNQDMKMIPVENYGVKCMSMGLLVEKDAPLVWRGPMVMSALAKMTKGVDWGDLDILVVDMPPGTGDAQISISQNLKLSGAVIVSTPQDVALADANRGISMFDKVRVPILGLVENMSCFVCPHCNEPSFIFGKEGARRTAAKKGLKLIGEIPLEMSIREGSDEGVPVVVSSPGSIVSKAYQDLAQNVVKGLKELRENPDNEIQMKLNVPHSSHSS.

The N-terminal 22 residues, 1–22, are a transit peptide targeting the mitochondrion; sequence MATVALLRSLRRRELHAAHISA. ATP is bound at residue 51–58; that stretch reads GKGGVGKS.

Belongs to the Mrp/NBP35 ATP-binding proteins family. The cofactor is [4Fe-4S] cluster.

It is found in the mitochondrion matrix. In terms of biological role, essential during early vegetative growth. Required for the assembly of the mitochondrial membrane respiratory chain NADH dehydrogenase (Complex I). Involved in mitochondrial translation activity. May deliver of one or more Fe-S clusters to complex I subunits. The chain is Iron-sulfur protein required for NADH dehydrogenase, mitochondrial from Arabidopsis thaliana (Mouse-ear cress).